We begin with the raw amino-acid sequence, 418 residues long: Tyrosine--tRNA ligase (418 aa).

Positions P42–H51 match the 'HIGH' region motif. A 'KMSKS' region motif is present at residues K226–S230. K229 is an ATP binding site. One can recognise an S4 RNA-binding domain in the interval V339–L400.

It belongs to the class-I aminoacyl-tRNA synthetase family. TyrS type 2 subfamily. In terms of assembly, homodimer.

It localises to the cytoplasm. It catalyses the reaction tRNA(Tyr) + L-tyrosine + ATP = L-tyrosyl-tRNA(Tyr) + AMP + diphosphate + H(+). Its function is as follows. Catalyzes the attachment of tyrosine to tRNA(Tyr) in a two-step reaction: tyrosine is first activated by ATP to form Tyr-AMP and then transferred to the acceptor end of tRNA(Tyr). The sequence is that of Tyrosine--tRNA ligase from Xylella fastidiosa (strain 9a5c).